Reading from the N-terminus, the 677-residue chain is DNA ligase (677 aa).

NAD(+) contacts are provided by residues 38-42 (DYDFD), 87-88 (SL), and Glu-121. The active-site N6-AMP-lysine intermediate is Lys-123. NAD(+) is bound by residues Arg-144, Glu-187, Lys-300, and Lys-324. Zn(2+) is bound by residues Cys-418, Cys-421, Cys-436, and Cys-442. Residues 601 to 677 (LINSNFEGLS…ISEEEFEAML (77 aa)) enclose the BRCT domain.

This sequence belongs to the NAD-dependent DNA ligase family. LigA subfamily. It depends on Mg(2+) as a cofactor. Requires Mn(2+) as cofactor.

The catalysed reaction is NAD(+) + (deoxyribonucleotide)n-3'-hydroxyl + 5'-phospho-(deoxyribonucleotide)m = (deoxyribonucleotide)n+m + AMP + beta-nicotinamide D-nucleotide.. In terms of biological role, DNA ligase that catalyzes the formation of phosphodiester linkages between 5'-phosphoryl and 3'-hydroxyl groups in double-stranded DNA using NAD as a coenzyme and as the energy source for the reaction. It is essential for DNA replication and repair of damaged DNA. This is DNA ligase from Chlorobium luteolum (strain DSM 273 / BCRC 81028 / 2530) (Pelodictyon luteolum).